The following is a 103-amino-acid chain: Truncated secreted TNF-receptor-like protein A53 (103 aa).

One copy of the TNFR-Cys 1 repeat lies at 36-73; it reads SCDKGEYLDKRHNQCCNRCPPGEFAKVRCNGNDNTKCE. 3 cysteine pairs are disulfide-bonded: cysteine 37-cysteine 50, cysteine 51-cysteine 64, and cysteine 54-cysteine 72. The stretch at 74-103 is one TNFR-Cys 2; truncated repeat; it reads RCPPHTYTTIPIILMDVINVENAQQDHLIR.

This sequence belongs to the poxviridae A53R protein family.

This chain is Truncated secreted TNF-receptor-like protein A53, found in Vaccinia virus (strain Copenhagen) (VACV).